The primary structure comprises 364 residues: tRNA-specific 2-thiouridylase MnmA (364 aa).

Residues 12–19 and methionine 38 each bind ATP; that span reads GMSGGVDS. Residues 98–100 are interaction with target base in tRNA; that stretch reads NPD. Cysteine 103 serves as the catalytic Nucleophile. A disulfide bond links cysteine 103 and cysteine 199. Glycine 127 serves as a coordination point for ATP. The interaction with tRNA stretch occupies residues 149–151; sequence KDQ. The active-site Cysteine persulfide intermediate is cysteine 199. The tract at residues 307 to 308 is interaction with tRNA; the sequence is RY.

Belongs to the MnmA/TRMU family.

The protein localises to the cytoplasm. It catalyses the reaction S-sulfanyl-L-cysteinyl-[protein] + uridine(34) in tRNA + AH2 + ATP = 2-thiouridine(34) in tRNA + L-cysteinyl-[protein] + A + AMP + diphosphate + H(+). Catalyzes the 2-thiolation of uridine at the wobble position (U34) of tRNA, leading to the formation of s(2)U34. The polypeptide is tRNA-specific 2-thiouridylase MnmA (Shouchella clausii (strain KSM-K16) (Alkalihalobacillus clausii)).